The chain runs to 238 residues: tRNA (guanine-N(1)-)-methyltransferase (238 aa).

S-adenosyl-L-methionine contacts are provided by residues Gly-112 and 131-136; that span reads LGDFIL.

Belongs to the RNA methyltransferase TrmD family. As to quaternary structure, homodimer.

It localises to the cytoplasm. It catalyses the reaction guanosine(37) in tRNA + S-adenosyl-L-methionine = N(1)-methylguanosine(37) in tRNA + S-adenosyl-L-homocysteine + H(+). Functionally, specifically methylates guanosine-37 in various tRNAs. This chain is tRNA (guanine-N(1)-)-methyltransferase, found in Nostoc punctiforme (strain ATCC 29133 / PCC 73102).